Here is a 477-residue protein sequence, read N- to C-terminus: UDP-N-acetylmuramate--L-alanine ligase (477 aa).

122–128 (GTHGKTT) is an ATP binding site.

It belongs to the MurCDEF family.

It localises to the cytoplasm. The catalysed reaction is UDP-N-acetyl-alpha-D-muramate + L-alanine + ATP = UDP-N-acetyl-alpha-D-muramoyl-L-alanine + ADP + phosphate + H(+). It participates in cell wall biogenesis; peptidoglycan biosynthesis. Its function is as follows. Cell wall formation. This is UDP-N-acetylmuramate--L-alanine ligase from Xylella fastidiosa (strain 9a5c).